We begin with the raw amino-acid sequence, 143 residues long: MRSSRQKASISKLDLDQFVFTPPGPMGWQAHDSISAEKEEEEKHLDVGSIRELPHINAPKEYQKETKEKETDRKIVDDEEETKFETTLEPEEERDSKRSAPPYEEEDEDEEPDLAEEAKVEIIILPSESKPAPWFSQTVKRKA.

The interval 1–143 (MRSSRQKASI…WFSQTVKRKA (143 aa)) is disordered. Basic and acidic residues-rich tracts occupy residues 34–46 (ISAE…KHLD) and 61–76 (EYQK…RKIV). Composition is skewed to acidic residues over residues 77 to 93 (DDEE…PEEE) and 103 to 115 (YEEE…PDLA).

This is an uncharacterized protein from Bacillus subtilis (strain 168).